Reading from the N-terminus, the 460-residue chain is NADH-ubiquinone oxidoreductase chain 4 (460 aa).

Transmembrane regions (helical) follow at residues 22–42 (WLWPTTLLHSLLIALASLSWL), 61–81 (PLSTPLLILSCWLLPLMILAS), 97–114 (YISLLTSLQFFLILAFSA), 118–140 (IMFYVMFEVTLIPTLILITRWGN), 149–169 (TYFLFYTLAGSLPLLVALLLL), 196–216 (IWWTGCILAFLVKMPLYGVHL), 226–246 (PIAGSMILAAVLLKLGGYGMM), 259–279 (LSYPFIILALWGVIMTGSICM), 286–305 (SLIAYSSVSHMGLVVGGILI), 309–331 (WGFTGALILMIAHGLTSSALFCL), 352–372 (MALPLMTAWWFIASLANLALP), 395–415 (IALTGLGMLITAGYSLYMFLM), and 437–457 (LLIALHLLPLLLLILKPELIW).

It belongs to the complex I subunit 4 family.

Its subcellular location is the mitochondrion membrane. It catalyses the reaction a ubiquinone + NADH + 5 H(+)(in) = a ubiquinol + NAD(+) + 4 H(+)(out). Its function is as follows. Core subunit of the mitochondrial membrane respiratory chain NADH dehydrogenase (Complex I) that is believed to belong to the minimal assembly required for catalysis. Complex I functions in the transfer of electrons from NADH to the respiratory chain. The immediate electron acceptor for the enzyme is believed to be ubiquinone. The sequence is that of NADH-ubiquinone oxidoreductase chain 4 (MT-ND4) from Tetraodon nigroviridis (Spotted green pufferfish).